Consider the following 262-residue polypeptide: MAPKGKKVAPAPLATKSAKSSESKNPLFESTPKNFGIGQSIQPKRNLSRFVKWPEYVRLQRQKKILSLRLKVPPSIAQFSQTLDKNTAAQAFKLLNKYRPETSAEKKERLTKEAAAIAEGKTAKDVSPKPVVVKYGLNHVVSLIENKKAKLVLIANDVDPIELVVFLPALCKKMGVPYAIVKGKARLGTLVHKKTSAVAALTEVNSADEAELSKLISTINANYIEKYEENRKHWGGGIMGSKANDKIAKKAKAAAAAVSTSN.

The segment at 1 to 36 (MAPKGKKVAPAPLATKSAKSSESKNPLFESTPKNFG) is disordered.

The protein belongs to the eukaryotic ribosomal protein eL8 family. As to quaternary structure, component of the large ribosomal subunit. Mature ribosomes consist of a small (40S) and a large (60S) subunit. The 40S subunit contains about 32 different proteins and 1 molecule of RNA (18S). The 60S subunit contains 45 different proteins and 3 molecules of RNA (25S, 5.8S and 5S).

The protein localises to the cytoplasm. Functionally, component of the ribosome, a large ribonucleoprotein complex responsible for the synthesis of proteins in the cell. The small ribosomal subunit (SSU) binds messenger RNAs (mRNAs) and translates the encoded message by selecting cognate aminoacyl-transfer RNA (tRNA) molecules. The large subunit (LSU) contains the ribosomal catalytic site termed the peptidyl transferase center (PTC), which catalyzes the formation of peptide bonds, thereby polymerizing the amino acids delivered by tRNAs into a polypeptide chain. The nascent polypeptides leave the ribosome through a tunnel in the LSU and interact with protein factors that function in enzymatic processing, targeting, and the membrane insertion of nascent chains at the exit of the ribosomal tunnel. This is Large ribosomal subunit protein eL8B from Candida albicans (strain SC5314 / ATCC MYA-2876) (Yeast).